A 565-amino-acid chain; its full sequence is Carboxylesterase 1D (565 aa).

Residues 1-18 form the signal peptide; sequence MRLYPLVWLFLAACTAWG. The N-linked (GlcNAc...) asparagine glycan is linked to N79. C87 and C116 are oxidised to a cystine. Catalysis depends on S221, which acts as the Acyl-ester intermediate. Residues C273 and C284 are joined by a disulfide bond. The Charge relay system role is filled by E353. K382 bears the N6-succinyllysine mark. H466 serves as the catalytic Charge relay system. N489 carries N-linked (GlcNAc...) asparagine glycosylation. Residues 562–565 carry the Prevents secretion from ER motif; that stretch reads HVEL.

The protein belongs to the type-B carboxylesterase/lipase family. Homotrimer. As to expression, detected in liver, lung and testis, but not in kidney (at protein level).

It is found in the endoplasmic reticulum lumen. The protein resides in the cytoplasm. It localises to the cytosol. Its subcellular location is the lipid droplet. The protein localises to the microsome. The enzyme catalyses all-trans-retinyl hexadecanoate + H2O = all-trans-retinol + hexadecanoate + H(+). It catalyses the reaction a carboxylic ester + H2O = an alcohol + a carboxylate + H(+). The catalysed reaction is a long-chain fatty acyl ethyl ester + H2O = a long-chain fatty acid + ethanol + H(+). FAEE-synthesizing and PNPB-hydrolyzing activities are both inhibited by DFP. Functionally, major lipase in white adipose tissue. Involved in the metabolism of xenobiotics and of natural substrates. Hydrolyzes triacylglycerols and monoacylglycerols, with a preference for monoacylglycerols. The susceptibility of the substrate increases with decreasing acyl chain length of the fatty acid moiety. Catalyzes the synthesis of fatty acid ethyl esters. Hydrolyzes retinyl esters. This Rattus norvegicus (Rat) protein is Carboxylesterase 1D.